The following is a 143-amino-acid chain: Hypoxic response protein 1 (143 aa).

2 consecutive CBS domains span residues 8 to 65 (MNAG…GLDP) and 73 to 131 (LARD…IVQF). A disulfide bridge connects residues C14 and C39. Positions 97 and 122 each coordinate Zn(2+).

Homodimer.

Its subcellular location is the secreted. Its function is as follows. Unlike some other CBS-domain containing proteins does not seem to bind AMP. This is Hypoxic response protein 1 (hrp1) from Mycobacterium tuberculosis (strain CDC 1551 / Oshkosh).